The sequence spans 215 residues: MQIQTILLCFSFSFSAAFYFHAGEREEKCIIEDIPSDTLITGTFKVQQWDIVRHDFLESAPGLGMFVTVTTYNDEVLLSKLYGAQGTFYFTSHSSGEHIICLESNSTQFVSFGGSKLRIHLDIRVGEHDLDAAIVQAKDKVNEVTFKLQHLIEQVEQILKEQDYQRDREENFRITSEDTNRNVLWWAFAQILIFISVGIFQMKHLKDFFIAKKLV.

An N-terminal signal peptide occupies residues 1-17 (MQIQTILLCFSFSFSAA). Over 18-167 (FYFHAGEREE…ILKEQDYQRD (150 aa)) the chain is Lumenal. The GOLD domain maps to 27–125 (EKCIIEDIPS…KLRIHLDIRV (99 aa)). A glycan (N-linked (GlcNAc...) asparagine) is linked at Asn-105. The stretch at 136 to 171 (QAKDKVNEVTFKLQHLIEQVEQILKEQDYQRDREEN) forms a coiled coil. A helical membrane pass occupies residues 168–185 (REENFRITSEDTNRNVLW). Residues 186 to 215 (WAFAQILIFISVGIFQMKHLKDFFIAKKLV) are Cytoplasmic-facing. Residues 208–209 (FF) carry the COPII vesicle coat-binding motif. The short motif at 208–215 (FFIAKKLV) is the COPI vesicle coat-binding element.

It belongs to the EMP24/GP25L family.

It localises to the endoplasmic reticulum membrane. In terms of biological role, part of a complex whose function is to bind Ca(2+) to the ER membrane and thereby regulate the retention of ER resident proteins. This Mus musculus (Mouse) protein is Transmembrane emp24 domain-containing protein 11 (Tmed11).